An 899-amino-acid chain; its full sequence is Protein translocase subunit SecA (899 aa).

ATP is bound by residues Q87, G105 to T109, and D516. Residues C884, C886, C895, and H896 each coordinate Zn(2+).

Belongs to the SecA family. In terms of assembly, monomer and homodimer. Part of the essential Sec protein translocation apparatus which comprises SecA, SecYEG and auxiliary proteins SecDF. Other proteins may also be involved. Zn(2+) serves as cofactor.

It localises to the cell inner membrane. Its subcellular location is the cytoplasm. The catalysed reaction is ATP + H2O + cellular proteinSide 1 = ADP + phosphate + cellular proteinSide 2.. Its function is as follows. Part of the Sec protein translocase complex. Interacts with the SecYEG preprotein conducting channel. Has a central role in coupling the hydrolysis of ATP to the transfer of proteins into and across the cell membrane, serving as an ATP-driven molecular motor driving the stepwise translocation of polypeptide chains across the membrane. The chain is Protein translocase subunit SecA from Borrelia garinii subsp. bavariensis (strain ATCC BAA-2496 / DSM 23469 / PBi) (Borreliella bavariensis).